The following is a 664-amino-acid chain: Methionine--tRNA ligase (664 aa).

The 'HIGH' region signature appears at 15–25 (YYPSGKAHIGH). The 'KMSKS' region signature appears at 310 to 314 (KMSKS). An ATP-binding site is contributed by Lys-313. A tRNA-binding domain is found at 563-664 (DFDKIDLRVA…SALPNGAKVK (102 aa)).

Belongs to the class-I aminoacyl-tRNA synthetase family. MetG type 2B subfamily. In terms of assembly, homodimer.

The protein localises to the cytoplasm. The catalysed reaction is tRNA(Met) + L-methionine + ATP = L-methionyl-tRNA(Met) + AMP + diphosphate. Functionally, is required not only for elongation of protein synthesis but also for the initiation of all mRNA translation through initiator tRNA(fMet) aminoacylation. The sequence is that of Methionine--tRNA ligase (metG) from Listeria innocua serovar 6a (strain ATCC BAA-680 / CLIP 11262).